Here is a 201-residue protein sequence, read N- to C-terminus: Sec-independent protein translocase protein TatB (201 aa).

The chain crosses the membrane as a helical span at residues 1 to 21 (MLDLGWSEILVIAVVLIVVVG). Positions 96-201 (LSEAAKAKPA…RRKKTAGTAP (106 aa)) are disordered. 2 stretches are compositionally biased toward low complexity: residues 102–114 (AKPA…AADS) and 159–187 (TSAK…APAK). A compositionally biased stretch (basic residues) spans 189-201 (PSPRRKKTAGTAP).

Belongs to the TatB family. In terms of assembly, the Tat system comprises two distinct complexes: a TatABC complex, containing multiple copies of TatA, TatB and TatC subunits, and a separate TatA complex, containing only TatA subunits. Substrates initially bind to the TatABC complex, which probably triggers association of the separate TatA complex to form the active translocon.

It localises to the cell inner membrane. Its function is as follows. Part of the twin-arginine translocation (Tat) system that transports large folded proteins containing a characteristic twin-arginine motif in their signal peptide across membranes. Together with TatC, TatB is part of a receptor directly interacting with Tat signal peptides. TatB may form an oligomeric binding site that transiently accommodates folded Tat precursor proteins before their translocation. The protein is Sec-independent protein translocase protein TatB of Chelativorans sp. (strain BNC1).